We begin with the raw amino-acid sequence, 30 residues long: Antifungal protein Lap (30 aa).

Its function is as follows. Displays antifungal activity against M.arachidicola and P.piricola, but not against R.solani, C.gossypii and C.comatus. Inhibits mycelial growth in P.piricola with an IC(50) of 70 nM. Displays very low cell-free translation inhibitory activity in a rabbit reticulocyte lysate system (IC(50)=70 uM) but is able to inhibit HIV-1 reverse transcriptase activity (IC(50)=5.2 nM). This Lyophyllum shimeji (Hon-shimeji) protein is Antifungal protein Lap.